The primary structure comprises 1073 residues: ATP-dependent helicase/deoxyribonuclease subunit B (1073 aa).

The protein belongs to the helicase family. AddB/RexB type 2 subfamily. As to quaternary structure, heterodimer of AddA and RexB. Mg(2+) serves as cofactor.

Functionally, the heterodimer acts as both an ATP-dependent DNA helicase and an ATP-dependent, dual-direction single-stranded exonuclease. Recognizes the chi site generating a DNA molecule suitable for the initiation of homologous recombination. This subunit has 5' -&gt; 3' nuclease activity but not helicase activity. The sequence is that of ATP-dependent helicase/deoxyribonuclease subunit B from Streptococcus equi subsp. zooepidemicus (strain H70).